A 283-amino-acid chain; its full sequence is MNPTETKAIPVSQQMEGPHLPNKKKHKKQAVKTEPEKKSQSTKLSVVHEKKSQEGKPKEHTEQKSLPKPASDTGSKDAHNKKAVSRSAEQQPSEKSTEPKTEPQDMVSAGGESVAGVAATSGKPGDKKKEKKSLTPAVPVESKPDKPSGKSGMDAALDDLIDTLGGPEEIEEENTTYTGPEVSDPMSSTYIEELGKREVTIPPKYRELLAKNEGITGPPADSSKPVGPDDAIDALSSDFTCGSPTAAGKKTEKEESTEVLKAQSAGTVRSAAPPQEKKRKVEK.

Residues 1–15 are compositionally biased toward polar residues; it reads MNPTETKAIPVSQQM. 2 disordered regions span residues 1-186 and 212-283; these read MNPT…SDPM and NEGI…KVEK. Residues 21–30 show a composition bias toward basic residues; that stretch reads PNKKKHKKQA. Lys32 is covalently cross-linked (Glycyl lysine isopeptide (Lys-Gly) (interchain with G-Cter in SUMO2)). Over residues 46 to 65 the composition is skewed to basic and acidic residues; sequence VVHEKKSQEGKPKEHTEQKS. Lys50 is modified (N6-acetyllysine). A Phosphoserine modification is found at Ser87. The segment covering 107–122 has biased composition (low complexity); that stretch reads VSAGGESVAGVAATSG. Residue Ser133 is modified to Phosphoserine. A Phosphothreonine modification is found at Thr135. The stretch at 170–222 is one Inhibitory domain 1 repeat; sequence IEEENTTYTGPEVSDPMSSTYIEELGKREVTIPPKYRELLAKNEGITGPPADS. Residues Ser222 and Ser243 each carry the phosphoserine modification. Positions 249–258 are enriched in basic and acidic residues; that stretch reads KKTEKEESTE.

It belongs to the protease inhibitor I27 (calpastatin) family.

In terms of biological role, specific inhibition of calpain (calcium-dependent cysteine protease). Plays a key role in postmortem tenderization of meat and have been proposed to be involved in muscle protein degradation in living tissue. The chain is Calpastatin (CAST) from Chlorocebus aethiops (Green monkey).